Here is a 633-residue protein sequence, read N- to C-terminus: Carbon monoxide dehydrogenase 2 (633 aa).

[4Fe-4S] cluster is bound by residues C44, C53, C56, C61, and C73. [Ni-4Fe-5S] cluster contacts are provided by H264, C343, C453, C484, and C525.

This sequence belongs to the Ni-containing carbon monoxide dehydrogenase family. In terms of assembly, homodimer. [4Fe-4S] cluster serves as cofactor. It depends on [Ni-4Fe-5S] cluster as a cofactor.

The enzyme catalyses CO + 2 oxidized [2Fe-2S]-[ferredoxin] + H2O = 2 reduced [2Fe-2S]-[ferredoxin] + CO2 + 2 H(+). Its function is as follows. CODH oxidizes carbon monoxide coupled, via CooF, to the reduction of a hydrogen cation by a hydrogenase (possibly CooH). The polypeptide is Carbon monoxide dehydrogenase 2 (cooS2) (Methanosarcina acetivorans (strain ATCC 35395 / DSM 2834 / JCM 12185 / C2A)).